The sequence spans 328 residues: 3,4-dihydroxyphenylacetaldehyde synthase 2 (328 aa).

Asn111 is a catalytic residue. Residue Lys222 is modified to N6-(pyridoxal phosphate)lysine.

The protein belongs to the group II decarboxylase family. Pyridoxal 5'-phosphate serves as cofactor.

It carries out the reaction L-dopa + O2 + H2O + H(+) = 3,4-dihydroxyphenylacetaldehyde + H2O2 + NH4(+) + CO2. Catalyzes the decarboxylation-oxidative deamination of L-3,4-dihydroxyphenylalanine (L-DOPA) to 3,4-dihydroxylphenylacetaldehyde (DHPAA). Involved in cuticle development. Probably responsible for the protein cross-linking during the development of flexible cuticles. The polypeptide is 3,4-dihydroxyphenylacetaldehyde synthase 2 (amd) (Drosophila simulans (Fruit fly)).